A 439-amino-acid chain; its full sequence is Proline--tRNA ligase (439 aa).

Belongs to the class-II aminoacyl-tRNA synthetase family. ProS type 2 subfamily. In terms of assembly, homodimer.

It localises to the cytoplasm. It carries out the reaction tRNA(Pro) + L-proline + ATP = L-prolyl-tRNA(Pro) + AMP + diphosphate. Catalyzes the attachment of proline to tRNA(Pro) in a two-step reaction: proline is first activated by ATP to form Pro-AMP and then transferred to the acceptor end of tRNA(Pro). The protein is Proline--tRNA ligase of Rhodopseudomonas palustris (strain BisB5).